The following is a 164-amino-acid chain: MKMFVPAVVFAALASASAWANNGDTAQPLEKIAPYPQAEKGMKRQVITLTPQQDESTLKVELLIGQTLNVDCNQHRLGGTLETKTLEGWGYDYYVFDNVTSPVSTMMACPEGKKEQKFVTAWLGEDGMLRYNSKLPIVVYTPANVDVKYRIWKADANVQNAIAR.

A signal peptide spans 1–20 (MKMFVPAVVFAALASASAWA). A disulfide bridge links C72 with C109.

The protein belongs to the protease inhibitor I11 (ecotin) family. As to quaternary structure, homodimer.

It is found in the periplasm. General inhibitor of pancreatic serine proteases: inhibits chymotrypsin, trypsin, elastases, factor X, kallikrein as well as a variety of other proteases. This chain is Ecotin, found in Salmonella typhi.